Reading from the N-terminus, the 351-residue chain is Nicotinate-nucleotide--dimethylbenzimidazole phosphoribosyltransferase (351 aa).

The active-site Proton acceptor is the glutamate 317.

The protein belongs to the CobT family.

The catalysed reaction is 5,6-dimethylbenzimidazole + nicotinate beta-D-ribonucleotide = alpha-ribazole 5'-phosphate + nicotinate + H(+). Its pathway is nucleoside biosynthesis; alpha-ribazole biosynthesis; alpha-ribazole from 5,6-dimethylbenzimidazole: step 1/2. In terms of biological role, catalyzes the synthesis of alpha-ribazole-5'-phosphate from nicotinate mononucleotide (NAMN) and 5,6-dimethylbenzimidazole (DMB). This is Nicotinate-nucleotide--dimethylbenzimidazole phosphoribosyltransferase from Bradyrhizobium sp. (strain ORS 278).